The chain runs to 344 residues: Phosphate acyltransferase (344 aa).

It belongs to the PlsX family. As to quaternary structure, homodimer. Probably interacts with PlsY.

It localises to the cytoplasm. It catalyses the reaction a fatty acyl-[ACP] + phosphate = an acyl phosphate + holo-[ACP]. Its pathway is lipid metabolism; phospholipid metabolism. In terms of biological role, catalyzes the reversible formation of acyl-phosphate (acyl-PO(4)) from acyl-[acyl-carrier-protein] (acyl-ACP). This enzyme utilizes acyl-ACP as fatty acyl donor, but not acyl-CoA. The chain is Phosphate acyltransferase from Acaryochloris marina (strain MBIC 11017).